A 389-amino-acid polypeptide reads, in one-letter code: Cytochrome B translational activator CBS2 (389 aa).

Its subcellular location is the mitochondrion. Functionally, translational activator of cytochrome b. The cytochrome b (coB) leader RNA may represent the target sequence for CBS1 and/ or CBS2. This is Cytochrome B translational activator CBS2 (CBS2) from Saccharomyces cerevisiae (strain ATCC 204508 / S288c) (Baker's yeast).